A 375-amino-acid chain; its full sequence is MKTQPSEESASPAPVNPGNSGNSGNRRASSTRISFSDQLDGGDSGDSSSNESERLMESDDEGNIQIPVPTGQPRGRMGRRFTLNPLIFAKEEREARRQSLAQLKLSYYPKHMNPEHYDTGLGFCGWFLMGLSWIMVISTFPVSIYFCMKVVQEYERAVIFRLGRLIGGGAKGPGIFFVLPCIESYTKVDLRTVSFSVPPQEILTKDSVTTSVDAVIYYRISNATVSVANVENAHHSTRLLAQTTLRNMLGTRSLSEILSDRETLAASMQTILDEATESWGIKVERVEIKDVRLPIQLQRAMAAEAEATREARAKVIAAEGEQKASRALRDAASVIAQSPAALQLRYLQTLNSVAAEKNSTIIFPLPMELVRHLIN.

A disordered region spans residues M1–G75. Low complexity predominate over residues S11–N50. Residues G120 to F140 traverse the membrane as a helical segment.

This sequence belongs to the band 7/mec-2 family.

Its subcellular location is the membrane. May be involved in cilia-related function. This chain is Stomatin-2 (sto-2), found in Caenorhabditis elegans.